The following is a 116-amino-acid chain: Ig heavy chain V region 1B43 (116 aa).

The first 18 residues, 1–18 (MRVLILLCLFTAFPGILS), serve as a signal peptide directing secretion. The framework-1 stretch occupies residues 19 to 48 (DVQLQESGPDLVKPSQSLSLTCTVTGYSIT). Residues C40 and C114 are joined by a disulfide bond. Residues 49-53 (SGYSW) are complementarity-determining-1. The tract at residues 54-67 (HWIRQFPGNKLEWM) is framework-2. The segment at 68-84 (GYIHYSGNTSYNPSLKS) is complementarity-determining-2. The interval 85-116 (RISITRDTSKNQFFLQLNSVTTEDTATYYCAR) is framework-3.

This is Ig heavy chain V region 1B43 from Mus musculus (Mouse).